Here is an 88-residue protein sequence, read N- to C-terminus: Small ribosomal subunit protein eS21 (88 aa).

It belongs to the eukaryotic ribosomal protein eS21 family. In terms of assembly, component of the small ribosomal subunit. Mature ribosomes consist of a small (40S) and a large (60S) subunit. The 40S subunit contains about 33 different proteins and 1 molecule of RNA (18S). The 60S subunit contains about 49 different proteins and 3 molecules of RNA (25S, 5.8S and 5S).

The protein localises to the cytoplasm. Its function is as follows. Required for the processing of the 20S rRNA-precursor to mature 18S rRNA in a late step of the maturation of 40S ribosomal subunits. Has a physiological role leading to 18S rRNA stability. In Aspergillus fumigatus (strain ATCC MYA-4609 / CBS 101355 / FGSC A1100 / Af293) (Neosartorya fumigata), this protein is Small ribosomal subunit protein eS21 (rps21).